Here is a 375-residue protein sequence, read N- to C-terminus: 4,4'-diaponeurosporenoate glycosyltransferase (375 aa).

4 helical membrane passes run 3-23 (WLSR…ALIF), 164-184 (FYEG…NVFS), 277-297 (IMAA…GLCL), and 330-350 (FSNL…KIFI).

Belongs to the glycosyltransferase 2 family. CrtQ subfamily.

Its subcellular location is the cell membrane. It functions in the pathway carotenoid biosynthesis; staphyloxanthin biosynthesis; staphyloxanthin from farnesyl diphosphate: step 4/5. In terms of biological role, catalyzes the glycosylation of 4,4'-diaponeurosporenoate, i.e. the esterification of glucose at the C1'' position with the carboxyl group of 4,4'-diaponeurosporenic acid, to form glycosyl-4,4'-diaponeurosporenoate. This is a step in the biosynthesis of staphyloxanthin, an orange pigment present in most staphylococci strains. The polypeptide is 4,4'-diaponeurosporenoate glycosyltransferase (crtQ) (Staphylococcus aureus (strain bovine RF122 / ET3-1)).